Consider the following 498-residue polypeptide: ATP synthase subunit beta, chloroplastic (498 aa).

Glycine 172 to threonine 179 contributes to the ATP binding site.

This sequence belongs to the ATPase alpha/beta chains family. As to quaternary structure, F-type ATPases have 2 components, CF(1) - the catalytic core - and CF(0) - the membrane proton channel. CF(1) has five subunits: alpha(3), beta(3), gamma(1), delta(1), epsilon(1). CF(0) has four main subunits: a(1), b(1), b'(1) and c(9-12).

The protein localises to the plastid. Its subcellular location is the chloroplast thylakoid membrane. It catalyses the reaction ATP + H2O + 4 H(+)(in) = ADP + phosphate + 5 H(+)(out). Its function is as follows. Produces ATP from ADP in the presence of a proton gradient across the membrane. The catalytic sites are hosted primarily by the beta subunits. The protein is ATP synthase subunit beta, chloroplastic of Aspidistra elatior (Cast-iron plant).